A 605-amino-acid polypeptide reads, in one-letter code: Elongation factor 4 (605 aa).

Residues 9-192 (SRIRNFCIIA…AIIARVPAPA (184 aa)) form the tr-type G domain. GTP contacts are provided by residues 21–26 (DHGKST) and 139–142 (NKID).

This sequence belongs to the TRAFAC class translation factor GTPase superfamily. Classic translation factor GTPase family. LepA subfamily.

The protein resides in the cell inner membrane. It catalyses the reaction GTP + H2O = GDP + phosphate + H(+). Its function is as follows. Required for accurate and efficient protein synthesis under certain stress conditions. May act as a fidelity factor of the translation reaction, by catalyzing a one-codon backward translocation of tRNAs on improperly translocated ribosomes. Back-translocation proceeds from a post-translocation (POST) complex to a pre-translocation (PRE) complex, thus giving elongation factor G a second chance to translocate the tRNAs correctly. Binds to ribosomes in a GTP-dependent manner. This chain is Elongation factor 4, found in Chlorobium luteolum (strain DSM 273 / BCRC 81028 / 2530) (Pelodictyon luteolum).